We begin with the raw amino-acid sequence, 943 residues long: Protein translocase subunit SecA (943 aa).

ATP is bound by residues Gln90, 108-112, and Asp509; that span reads GEGKT. Residues 535 to 564 form a disordered region; that stretch reads PDNEHKPPIPKQRNSKSKGGFSKKASSKLK.

It belongs to the SecA family. As to quaternary structure, monomer and homodimer. Part of the essential Sec protein translocation apparatus which comprises SecA, SecYEG and auxiliary proteins SecDF. Other proteins may also be involved.

Its subcellular location is the cell inner membrane. The protein localises to the cellular thylakoid membrane. The protein resides in the cytoplasm. The enzyme catalyses ATP + H2O + cellular proteinSide 1 = ADP + phosphate + cellular proteinSide 2.. In terms of biological role, part of the Sec protein translocase complex. Interacts with the SecYEG preprotein conducting channel. Has a central role in coupling the hydrolysis of ATP to the transfer of proteins into and across the cell membrane, serving as an ATP-driven molecular motor driving the stepwise translocation of polypeptide chains across the membrane. Its function is as follows. Probably participates in protein translocation into and across both the cytoplasmic and thylakoid membranes in cyanobacterial cells. The sequence is that of Protein translocase subunit SecA from Prochlorococcus marinus (strain MIT 9215).